The primary structure comprises 509 residues: Putative ATP-dependent RNA helicase QP509L (509 aa).

The 153-residue stretch at 110 to 262 folds into the Helicase ATP-binding domain; the sequence is KKLLPPYGRF…KIIIHHLGQP (153 aa). Position 123–130 (123–130) interacts with ATP; sequence LNTGLGKT. Residues 215–218 carry the DEAH box motif; it reads DEAH.

It belongs to the DEAD box helicase family. DEAH subfamily.

It catalyses the reaction ATP + H2O = ADP + phosphate + H(+). The polypeptide is Putative ATP-dependent RNA helicase QP509L (African swine fever virus (isolate Tick/Malawi/Lil 20-1/1983) (ASFV)).